The sequence spans 586 residues: Arginine--tRNA ligase (586 aa).

Positions 127–137 match the 'HIGH' region motif; the sequence is PNVAKEMHVGH.

Belongs to the class-I aminoacyl-tRNA synthetase family. In terms of assembly, monomer.

Its subcellular location is the cytoplasm. It catalyses the reaction tRNA(Arg) + L-arginine + ATP = L-arginyl-tRNA(Arg) + AMP + diphosphate. In Streptomyces coelicolor (strain ATCC BAA-471 / A3(2) / M145), this protein is Arginine--tRNA ligase (argS).